A 375-amino-acid chain; its full sequence is Coproporphyrin III ferrochelatase (375 aa).

Residues Ser59 and Tyr128 each coordinate Fe-coproporphyrin III. Residues His191 and Glu286 each coordinate Fe(2+).

It belongs to the ferrochelatase family.

Its subcellular location is the cytoplasm. It carries out the reaction Fe-coproporphyrin III + 2 H(+) = coproporphyrin III + Fe(2+). Its pathway is porphyrin-containing compound metabolism; protoheme biosynthesis. Involved in coproporphyrin-dependent heme b biosynthesis. Catalyzes the insertion of ferrous iron into coproporphyrin III to form Fe-coproporphyrin III. The chain is Coproporphyrin III ferrochelatase from Streptomyces coelicolor (strain ATCC BAA-471 / A3(2) / M145).